A 167-amino-acid polypeptide reads, in one-letter code: G/U mismatch-specific DNA glycosylase (167 aa).

It belongs to the uracil-DNA glycosylase (UDG) superfamily. TDG/mug family. In terms of assembly, binds DNA as a monomer.

Its subcellular location is the cytoplasm. It carries out the reaction Specifically hydrolyzes mismatched double-stranded DNA and polynucleotides, releasing free uracil.. Functionally, excises ethenocytosine and uracil, which can arise by alkylation or deamination of cytosine, respectively, from the corresponding mispairs with guanine in ds-DNA. It is capable of hydrolyzing the carbon-nitrogen bond between the sugar-phosphate backbone of the DNA and the mispaired base. The complementary strand guanine functions in substrate recognition. Required for DNA damage lesion repair in stationary-phase cells. The chain is G/U mismatch-specific DNA glycosylase from Pectobacterium carotovorum subsp. carotovorum (strain PC1).